Consider the following 358-residue polypeptide: Protein RecA (358 aa).

78–85 (GPESGGKT) contributes to the ATP binding site.

This sequence belongs to the RecA family.

It is found in the cytoplasm. In terms of biological role, can catalyze the hydrolysis of ATP in the presence of single-stranded DNA, the ATP-dependent uptake of single-stranded DNA by duplex DNA, and the ATP-dependent hybridization of homologous single-stranded DNAs. It interacts with LexA causing its activation and leading to its autocatalytic cleavage. This is Protein RecA from Deinococcus geothermalis (strain DSM 11300 / CIP 105573 / AG-3a).